A 164-amino-acid polypeptide reads, in one-letter code: Crossover junction endodeoxyribonuclease RuvC (164 aa).

Residues aspartate 7, glutamate 66, and aspartate 138 contribute to the active site. 3 residues coordinate Mg(2+): aspartate 7, glutamate 66, and aspartate 138.

The protein belongs to the RuvC family. Homodimer which binds Holliday junction (HJ) DNA. The HJ becomes 2-fold symmetrical on binding to RuvC with unstacked arms; it has a different conformation from HJ DNA in complex with RuvA. In the full resolvosome a probable DNA-RuvA(4)-RuvB(12)-RuvC(2) complex forms which resolves the HJ. The cofactor is Mg(2+).

It is found in the cytoplasm. It catalyses the reaction Endonucleolytic cleavage at a junction such as a reciprocal single-stranded crossover between two homologous DNA duplexes (Holliday junction).. The RuvA-RuvB-RuvC complex processes Holliday junction (HJ) DNA during genetic recombination and DNA repair. Endonuclease that resolves HJ intermediates. Cleaves cruciform DNA by making single-stranded nicks across the HJ at symmetrical positions within the homologous arms, yielding a 5'-phosphate and a 3'-hydroxyl group; requires a central core of homology in the junction. The consensus cleavage sequence is 5'-(A/T)TT(C/G)-3'. Cleavage occurs on the 3'-side of the TT dinucleotide at the point of strand exchange. HJ branch migration catalyzed by RuvA-RuvB allows RuvC to scan DNA until it finds its consensus sequence, where it cleaves and resolves the cruciform DNA. The sequence is that of Crossover junction endodeoxyribonuclease RuvC from Paracoccus denitrificans (strain Pd 1222).